A 264-amino-acid chain; its full sequence is Nicotinamide N-methyltransferase (264 aa).

Arg18 carries the post-translational modification Citrulline; alternate. Residues Tyr20 and Tyr25 each contribute to the S-adenosyl-L-methionine site. Lys39 carries the post-translational modification N6-acetyllysine. The S-adenosyl-L-methionine site is built by Gly63, Tyr69, Asp85, and Asn90. Residue Arg132 is modified to Citrulline; alternate. S-adenosyl-L-methionine contacts are provided by residues 142 to 143 (DV) and Thr163. The residue at position 181 (Arg181) is a Citrulline; alternate. Nicotinamide-binding residues include Asp197 and Ser213.

Belongs to the class I-like SAM-binding methyltransferase superfamily. NNMT/PNMT/TEMT family. In terms of assembly, monomer. In terms of processing, deiminated by PADI1 and PADI2. In terms of tissue distribution, predominantly expressed in the liver. A lower expression is seen in the kidney, lung, skeletal muscle, placenta and heart. Not detected in the brain or pancreas.

The protein resides in the cytoplasm. The catalysed reaction is nicotinamide + S-adenosyl-L-methionine = 1-methylnicotinamide + S-adenosyl-L-homocysteine. Its pathway is cofactor metabolism. The protein operates within amino-acid degradation. Inactivated by deimination on Arg-132. Its function is as follows. Catalyzes the N-methylation of nicotinamide using the universal methyl donor S-adenosyl-L-methionine to form N1-methylnicotinamide and S-adenosyl-L-homocysteine, a predominant nicotinamide/vitamin B3 clearance pathway. Plays a central role in regulating cellular methylation potential, by consuming S-adenosyl-L-methionine and limiting its availability for other methyltransferases. Actively mediates genome-wide epigenetic and transcriptional changes through hypomethylation of repressive chromatin marks, such as H3K27me3. In a developmental context, contributes to low levels of the repressive histone marks that characterize pluripotent embryonic stem cell pre-implantation state. Acts as a metabolic regulator primarily on white adipose tissue energy expenditure as well as hepatic gluconeogenesis and cholesterol biosynthesis. In white adipocytes, regulates polyamine flux by consuming S-adenosyl-L-methionine which provides for propylamine group in polyamine biosynthesis, whereas by consuming nicotinamide controls NAD(+) levels through the salvage pathway. Via its product N1-methylnicotinamide regulates protein acetylation in hepatocytes, by repressing the ubiquitination and increasing the stability of SIRT1 deacetylase. Can also N-methylate other pyridines structurally related to nicotinamide and play a role in xenobiotic detoxification. This chain is Nicotinamide N-methyltransferase, found in Homo sapiens (Human).